The primary structure comprises 308 residues: Cytochrome c biogenesis protein CcsA (308 aa).

7 helical membrane passes run 2–22 (IVST…SILI), 44–64 (GMLV…IYLG), 71–91 (LSES…IAYF), 143–163 (MILG…LMVI), 212–232 (VIGL…VWAN), 239–259 (WSWD…AIYL), and 273–293 (AIVA…VNLV).

The protein belongs to the CcmF/CycK/Ccl1/NrfE/CcsA family. May interact with Ccs1.

Its subcellular location is the plastid membrane. Required during biogenesis of c-type cytochromes (cytochrome c6 and cytochrome f) at the step of heme attachment. The chain is Cytochrome c biogenesis protein CcsA from Cuscuta exaltata (Tall dodder).